The following is a 203-amino-acid chain: Akirin-2 (203 aa).

Phosphoserine occurs at positions 18 and 21. A Nuclear localization signal motif is present at residues 22–27; that stretch reads PKRRRC. At Ser57 the chain carries Phosphoserine. The SYVS motif signature appears at 200–203; it reads SYVS.

The protein belongs to the akirin family. Homodimer. Interacts with IPO9; the interaction is direct. Associates with 20S and 26S proteasomes. Interacts with SMARCD1; promoting SWI/SNF complex recruitment. Interacts with NFKBIZ. Interacts with YWHAB. In terms of processing, polyubiquitinated. Polyubiquitination is dependent of UBR5 that extends pre-ubiquitinated AKIRIN2. In terms of tissue distribution, widely expressed. Most abundant in the lung, followed by the skeletal muscle, heart, liver, fat, thymus, lymph node, small intestine, kidney and spleen. In skeletal muscle, expressed at higher level in fast extensor digitorum longus (EDL) and longissimus lumborum (LL) muscles than in slow soleus (SOL) muscles.

It localises to the nucleus. The protein resides in the cytoplasm. The protein localises to the membrane. Functionally, molecular adapter that acts as a bridge between a variety of multiprotein complexes, and which is involved in embryonic development, immunity, myogenesis and brain development. Plays a key role in nuclear protein degradation by promoting import of proteasomes into the nucleus: directly binds to fully assembled 20S proteasomes at one end and to nuclear import receptor IPO9 at the other end, bridging them together and mediating the import of pre-assembled proteasome complexes through the nuclear pore. Involved in innate immunity by regulating the production of interleukin-6 (IL6) downstream of Toll-like receptor (TLR): acts by bridging the NF-kappa-B inhibitor NFKBIZ and the SWI/SNF complex, leading to promote induction of IL6. Also involved in adaptive immunity by promoting B-cell activation. Involved in brain development: required for the survival and proliferation of cerebral cortical progenitor cells. Involved in myogenesis: required for skeletal muscle formation and skeletal development, possibly by regulating expression of muscle differentiation factors. The chain is Akirin-2 from Sus scrofa (Pig).